Here is a 754-residue protein sequence, read N- to C-terminus: Nibrin (754 aa).

Residues 24–83 (YVVGRKNCAILIENDQSISRNHAVLTANFSVTNLSQTDEIPVLTLKDNSKYGTFVNEEKM) form the FHA domain. 2 BRCT domains span residues 105 to 181 (KFRI…TEFL) and 224 to 315 (GKTF…LAVI). The segment at 111 to 328 (EPLVACSSCL…TKNYCDPQGH (218 aa)) is mediates interaction with SP100. The interval 221-402 (IFKGKTFIFL…FRMLSQDAPT (182 aa)) is interaction with MTOR, MAPKAP1 and RICTOR. Serine 278 bears the Phosphoserine; by ATM mark. Residues 326-346 (QGHPSTGLKTTTPGPSLSQGV) form a disordered region. Residues 328-346 (HPSTGLKTTTPGPSLSQGV) are compositionally biased toward polar residues. At threonine 337 the chain carries Phosphothreonine. Position 343 is a phosphoserine; by ATM (serine 343). Serine 347 carries the phosphoserine modification. Lysine 388 is subject to N6-lactoyllysine. 2 disordered regions span residues 396–415 (LSQD…NNNS) and 430–478 (QLSP…MSSC). Serine 397 is subject to Phosphoserine. Threonine 402 is subject to Phosphothreonine. 2 stretches are compositionally biased toward polar residues: residues 430 to 440 (QLSPTKLPSIN) and 447 to 462 (SQQQ…FQPS). Position 432 is a phosphoserine; by CDK2 (serine 432). A Glycyl lysine isopeptide (Lys-Gly) (interchain with G-Cter in ubiquitin) cross-link involves residue lysine 435. The Nuclear localization signal signature appears at 461-467 (PSTKKRE). Serine 509 and serine 518 each carry phosphoserine. Glycyl lysine isopeptide (Lys-Gly) (interchain with G-Cter in SUMO2) cross-links involve residues lysine 529, lysine 571, and lysine 582. Serine 615 and serine 673 each carry phosphoserine. Glycyl lysine isopeptide (Lys-Gly) (interchain with G-Cter in ubiquitin) cross-links involve residues lysine 686, lysine 690, and lysine 735. The FxF/Y motif motif lies at 740–749 (ADDLFRYNPY).

It belongs to the Nibrin family. In terms of assembly, component of the MRN complex composed of two heterodimers RAD50 and MRE11 associated with a single NBN. The MRN complexes dimerize on DNA to form joined MRN-MRN oligomers required for DNA double-strand break repair. As part of the MRN complex, interacts with MCM9; the interaction recruits the complex to DNA repair sites. Component of the BASC complex, at least composed of BRCA1, MSH2, MSH6, MLH1, ATM, BLM, RAD50, MRE11 and NBN. Interacts with histone H2AX; this requires phosphorylation of H2AX on 'Ser-139' and promotes NBN recruitment to DNA damage sites. Interacts with (phosphorylated) MDC1; promoting NBN recruitment to DNA damage sites. Interacts with (phosphorylated) RAD17; promoting NBN recruitment to DNA damage sites. Interacts (via FxF/Y motif) with ATM. Interacts with HJURP. Interacts with INTS3. Interacts with KPNA2. Interacts with TERF2; interaction is disrupted upon NBN phosphorylation by CDK2. Interacts with (phosphorylated) RBBP8/CtIP; the interaction links the role of the MRN complex in DNA double-strand break sensing to resection. Interacts with SP100; recruits NBN to PML bodies. Interacts with ATF2. Interacts with MTOR, MAPKAP1 isoform 2 and RICTOR; indicative for an association with the mTORC2 complex. Interacts with MRNIP. Interacts with UFL1; promoting UFL1 recruitment to double-strand breaks following DNA damage. Interacts with CYREN (via XLF motif). (Microbial infection) Interacts with herpes simplex virus 1 protein UL12. Phosphorylated by ATM in response of ionizing radiation, and such phosphorylation is responsible intra-S phase checkpoint control and telomere maintenance. Phosphorylated at Ser-432 by CDK2 in S/G2 phases abolishes interaction with TERF2, enabling DCLRE1B/Apollo recruitment to telomeres. Phosphorylation at Ser-432 in response to dysfunctional telomeres promotes non-homologous end joining repair at telomeres, while dephosphorylation by PPP1CA promotes microhomology-mediated end-joining (MMEJ) repair. Post-translationally, ubiquitinated at Lys-435 via 'Lys-6'-linked ubiquitin chains by RNF8, promoting NBN recruitment to DNA double-strand breaks (DSBs). Ubiquitinated at Lys-686 and Lys-689 via 'Lys-63'-linked ubiquitin chains by PELI1: ubiquitination takes place following PELI1 phosphorylation and promotes ATM activation and DNA repair. Ubiquitinated at Lys-735 via 'Lys-63'-linked ubiquitin chains by the SCF(SKP2) complex: ubiquitination takes place following SKP2 phosphorylation and promotes ATM activation and DNA repair. In terms of processing, lactylation at Lys-388 by KAT5 in response to DNA damage promotes recruitment of the MRN complex to DNA damage sites. Delactylated by HDAC3. In terms of tissue distribution, ubiquitous. Expressed at high levels in testis.

The protein resides in the nucleus. It is found in the chromosome. The protein localises to the PML body. Its subcellular location is the telomere. In terms of biological role, component of the MRN complex, which plays a central role in double-strand break (DSB) repair, DNA recombination, maintenance of telomere integrity and meiosis. The MRN complex is involved in the repair of DNA double-strand breaks (DSBs) via homologous recombination (HR), an error-free mechanism which primarily occurs during S and G2 phases. The complex (1) mediates the end resection of damaged DNA, which generates proper single-stranded DNA, a key initial steps in HR, and is (2) required for the recruitment of other repair factors and efficient activation of ATM and ATR upon DNA damage. The MRN complex possesses single-strand endonuclease activity and double-strand-specific 3'-5' exonuclease activity, which are provided by MRE11, to initiate end resection, which is required for single-strand invasion and recombination. Within the MRN complex, NBN acts as a protein-protein adapter, which specifically recognizes and binds phosphorylated proteins, promoting their recruitment to DNA damage sites. Recruits MRE11 and RAD50 components of the MRN complex to DSBs in response to DNA damage. Promotes the recruitment of PI3/PI4-kinase family members ATM, ATR, and probably DNA-PKcs to the DNA damage sites, activating their functions. Mediates the recruitment of phosphorylated RBBP8/CtIP to DSBs, leading to cooperation between the MRN complex and RBBP8/CtIP to initiate end resection. RBBP8/CtIP specifically promotes the endonuclease activity of the MRN complex to clear DNA ends containing protein adducts. The MRN complex is also required for the processing of R-loops. NBN also functions in telomere length maintenance via its interaction with TERF2: interaction with TERF2 during G1 phase preventing recruitment of DCLRE1B/Apollo to telomeres. NBN also promotes DNA repair choice at dysfunctional telomeres: NBN phosphorylation by CDK2 promotes non-homologous end joining repair at telomeres, while unphosphorylated NBN promotes microhomology-mediated end-joining (MMEJ) repair. Enhances AKT1 phosphorylation possibly by association with the mTORC2 complex. This Homo sapiens (Human) protein is Nibrin.